A 384-amino-acid chain; its full sequence is Beta-ureidopropionase (384 aa).

Positions 72–344 (VHVGLVQNRI…DGLLVAKLDL (273 aa)) constitute a CN hydrolase domain. Glu-119 functions as the Proton acceptor in the catalytic mechanism. The active-site Proton donor is the Lys-196. The active-site Nucleophile is the Cys-233. At Ser-378 the chain carries Phosphoserine.

This sequence belongs to the carbon-nitrogen hydrolase superfamily. BUP family. In terms of assembly, homodimer, homotetramer, homooctamer; can also form higher homooligomers.

It is found in the cytoplasm. It carries out the reaction 3-(carbamoylamino)propanoate + H2O + 2 H(+) = beta-alanine + NH4(+) + CO2. It catalyses the reaction 3-(carbamoylamino)-2-methylpropanoate + H2O + 2 H(+) = (R)-3-amino-2-methylpropanoate + NH4(+) + CO2. Its pathway is amino-acid biosynthesis; beta-alanine biosynthesis. In terms of biological role, catalyzes a late step in pyrimidine degradation. Converts N-carbamoyl-beta-alanine (3-ureidopropanoate) into beta-alanine, ammonia and carbon dioxide. Likewise, converts N-carbamoyl-beta-aminoisobutyrate (3-ureidoisobutyrate) into beta-aminoisobutyrate, ammonia and carbon dioxide. The sequence is that of Beta-ureidopropionase (UPB1) from Pongo abelii (Sumatran orangutan).